Here is a 629-residue protein sequence, read N- to C-terminus: Dihydroxy-acid dehydratase 2 (629 aa).

Residue D82 coordinates Mg(2+). C123 lines the [2Fe-2S] cluster pocket. Residues D124 and K125 each contribute to the Mg(2+) site. K125 bears the N6-carboxylysine mark. A [2Fe-2S] cluster-binding site is contributed by C197. E493 provides a ligand contact to Mg(2+). S519 (proton acceptor) is an active-site residue. The disordered stretch occupies residues 603-629 (DKGGVRRLPPDELGGPEAAFDTQTRAG).

It belongs to the IlvD/Edd family. As to quaternary structure, homodimer. Requires [2Fe-2S] cluster as cofactor. Mg(2+) is required as a cofactor.

It catalyses the reaction (2R)-2,3-dihydroxy-3-methylbutanoate = 3-methyl-2-oxobutanoate + H2O. The enzyme catalyses (2R,3R)-2,3-dihydroxy-3-methylpentanoate = (S)-3-methyl-2-oxopentanoate + H2O. The protein operates within amino-acid biosynthesis; L-isoleucine biosynthesis; L-isoleucine from 2-oxobutanoate: step 3/4. Its pathway is amino-acid biosynthesis; L-valine biosynthesis; L-valine from pyruvate: step 3/4. Its function is as follows. Functions in the biosynthesis of branched-chain amino acids. Catalyzes the dehydration of (2R,3R)-2,3-dihydroxy-3-methylpentanoate (2,3-dihydroxy-3-methylvalerate) into 2-oxo-3-methylpentanoate (2-oxo-3-methylvalerate) and of (2R)-2,3-dihydroxy-3-methylbutanoate (2,3-dihydroxyisovalerate) into 2-oxo-3-methylbutanoate (2-oxoisovalerate), the penultimate precursor to L-isoleucine and L-valine, respectively. This is Dihydroxy-acid dehydratase 2 from Nocardia farcinica (strain IFM 10152).